The chain runs to 692 residues: Elongation factor G (692 aa).

One can recognise a tr-type G domain in the interval 8–283 (KNTRNIGIMA…AVVDYLPSPV (276 aa)). GTP contacts are provided by residues 17 to 24 (AHIDAGKT), 81 to 85 (DTPGH), and 135 to 138 (NKMD).

It belongs to the TRAFAC class translation factor GTPase superfamily. Classic translation factor GTPase family. EF-G/EF-2 subfamily.

It localises to the cytoplasm. Its function is as follows. Catalyzes the GTP-dependent ribosomal translocation step during translation elongation. During this step, the ribosome changes from the pre-translocational (PRE) to the post-translocational (POST) state as the newly formed A-site-bound peptidyl-tRNA and P-site-bound deacylated tRNA move to the P and E sites, respectively. Catalyzes the coordinated movement of the two tRNA molecules, the mRNA and conformational changes in the ribosome. This Exiguobacterium sp. (strain ATCC BAA-1283 / AT1b) protein is Elongation factor G.